The chain runs to 694 residues: Methionine--tRNA ligase (694 aa).

The short motif at 12–22 is the 'HIGH' region element; that stretch reads PYANGPLHLGH. Positions 143, 146, 156, and 159 each coordinate Zn(2+). Residues 330–334 carry the 'KMSKS' region motif; that stretch reads KMSKS. Residue lysine 333 coordinates ATP. Over residues 550–573 the composition is skewed to low complexity; that stretch reads MAAPAAPATTTKPAPSKADAKPAA. Residues 550–582 are disordered; it reads MAAPAAPATTTKPAPSKADAKPAAVANPESQTT. In terms of domain architecture, tRNA-binding spans 591–694; it reads DFAKLDLRIG…SGAQPGMPVR (104 aa).

It belongs to the class-I aminoacyl-tRNA synthetase family. MetG type 1 subfamily. As to quaternary structure, homodimer. Requires Zn(2+) as cofactor.

It is found in the cytoplasm. It carries out the reaction tRNA(Met) + L-methionine + ATP = L-methionyl-tRNA(Met) + AMP + diphosphate. Its function is as follows. Is required not only for elongation of protein synthesis but also for the initiation of all mRNA translation through initiator tRNA(fMet) aminoacylation. The polypeptide is Methionine--tRNA ligase (Xanthomonas euvesicatoria pv. vesicatoria (strain 85-10) (Xanthomonas campestris pv. vesicatoria)).